We begin with the raw amino-acid sequence, 272 residues long: tRNA pseudouridine synthase B (272 aa).

D38 functions as the Nucleophile in the catalytic mechanism.

Belongs to the pseudouridine synthase TruB family. Type 1 subfamily.

It catalyses the reaction uridine(55) in tRNA = pseudouridine(55) in tRNA. Functionally, responsible for synthesis of pseudouridine from uracil-55 in the psi GC loop of transfer RNAs. The chain is tRNA pseudouridine synthase B from Campylobacter jejuni (strain RM1221).